The sequence spans 148 residues: Nodulation protein NolJ (148 aa).

The segment covering 66–78 (ADEAMEETEEDAD) has biased composition (acidic residues). Disordered stretches follow at residues 66–93 (ADEA…VSDG) and 124–148 (AAKG…RGYG). The segment covering 124–136 (AAKGAGAAVPGPN) has biased composition (low complexity).

Functionally, involved in efficiency of soybean nodulation and in nodulation delay. In Rhizobium fredii (Sinorhizobium fredii), this protein is Nodulation protein NolJ (nolJ).